The chain runs to 175 residues: Phosphatidylglycerol/phosphatidylinositol transfer protein (175 aa).

Positions 1 to 21 are cleaved as a signal peptide; the sequence is MKFLSTAAALLVCLAPVSTTA. Positions 22–37 are excised as a propeptide; it reads RSLDFFKSSQSPIQAQ.

The protein belongs to the NPC2 family. Monomer.

The protein resides in the cytoplasm. Its subcellular location is the cytoplasmic vesicle. The protein localises to the golgi apparatus. Functionally, catalyzes the intermembrane transfer of phosphatidylglycerol and phosphatidylinositol. In Aspergillus oryzae (strain ATCC 42149 / RIB 40) (Yellow koji mold), this protein is Phosphatidylglycerol/phosphatidylinositol transfer protein (pltp).